We begin with the raw amino-acid sequence, 295 residues long: Thioredoxin-related transmembrane protein 2 (295 aa).

A signal peptide spans 1–48; sequence MAVLAPLIALVYSVPRLSRWLARPYCLLSALLSIAFLLVRKLPPICNG. The Extracellular segment spans residues 49-102; sequence LPTQREDGNPCDFDWREVEILMFLSAIVMMKNRRSITVEQHVGNIFMFSKVANA. A helical membrane pass occupies residues 103 to 125; that stretch reads ILFFRLDIRMGLLYLTLCIVFLM. The Thioredoxin domain occupies 114 to 269; the sequence is LLYLTLCIVF…LYQRAKKLSK (156 aa). Residues 126-295 are Cytoplasmic-facing; sequence TCKPPLYMGP…VPDGENKKDK (170 aa). 2 positions are modified to phosphoserine: Ser-211 and Ser-243. The interval 266-295 is disordered; that stretch reads KLSKGGDMSEEKPGNPTPTAVPDGENKKDK. Positions 292-295 match the Di-lysine motif motif; the sequence is KKDK.

Monomer. Homodimer; disulfide-linked. Occurs in both reduced and oxidized monomeric form. Oxidative conditions increase homodimerization. Interacts with CANX. Interacts with ATP2A2.

Its subcellular location is the endoplasmic reticulum membrane. It is found in the mitochondrion membrane. Its function is as follows. Endoplasmic reticulum and mitochondria-associated protein that probably functions as a regulator of cellular redox state and thereby regulates protein post-translational modification, protein folding and mitochondrial activity. Indirectly regulates neuronal proliferation, migration, and organization in the developing brain. This Rattus norvegicus (Rat) protein is Thioredoxin-related transmembrane protein 2 (Tmx2).